The chain runs to 315 residues: Glutathione synthetase (315 aa).

One can recognise an ATP-grasp domain in the interval 125 to 310 (KLFTAWFSDL…ITGMLMDAIE (186 aa)). Position 151–207 (151–207 (WEKHSDIILKPLDGMGGASIFRVKEGDPNLGVIAETLTEHGTRYCMAQNYLPAIKDG)) interacts with ATP. Residues Glu-281 and Asn-283 each coordinate Mg(2+).

It belongs to the prokaryotic GSH synthase family. The cofactor is Mg(2+). Requires Mn(2+) as cofactor.

The enzyme catalyses gamma-L-glutamyl-L-cysteine + glycine + ATP = glutathione + ADP + phosphate + H(+). It participates in sulfur metabolism; glutathione biosynthesis; glutathione from L-cysteine and L-glutamate: step 2/2. This is Glutathione synthetase from Escherichia coli O157:H7.